The primary structure comprises 253 residues: 5-oxoprolinase subunit A (253 aa).

Belongs to the LamB/PxpA family. In terms of assembly, forms a complex composed of PxpA, PxpB and PxpC.

It carries out the reaction 5-oxo-L-proline + ATP + 2 H2O = L-glutamate + ADP + phosphate + H(+). In terms of biological role, catalyzes the cleavage of 5-oxoproline to form L-glutamate coupled to the hydrolysis of ATP to ADP and inorganic phosphate. This Bacillus cereus (strain ATCC 14579 / DSM 31 / CCUG 7414 / JCM 2152 / NBRC 15305 / NCIMB 9373 / NCTC 2599 / NRRL B-3711) protein is 5-oxoprolinase subunit A.